Reading from the N-terminus, the 341-residue chain is MIINIVEILIFLVCVLFSVAYLTVAERKTLAYMQRRLGPNFVGYYGLLQAFADAVKLLLKEIVLPKESNYIILVISPLITLITALIGWVVIPLGPGITLGELNLGILFSLAIGSLGVFGSLLSGWSSNSKYSLLGSIRSTAQLISYELILTSIFIIIIMFVSSLNITTIIETQRVVWYCIPLLPLLLIFFIASVAETARPPFDLTESESELVAGYFTEYSGSPFVFFFLAEYSNIILISAFNGYLLLGGYLSFNYSYLFNILFNDYSYVSFLFEGLINSSAYAIKLVFLMFSFIWVRAAFPRFTYDNLINFCWIILLPLLFGIFLIIPSTLYIFDSFPTLI.

Helical transmembrane passes span 2–22 (IINI…VAYL), 39–59 (PNFV…KLLL), 71–91 (IILV…WVVI), 104–124 (LGIL…LLSG), 141–161 (AQLI…IMFV), 175–195 (VVWY…ASVA), 212–230 (VAGY…FFLA), 243–263 (GYLL…NILF), 276–296 (LINS…FIWV), and 308–328 (LINF…LIIP).

It belongs to the complex I subunit 1 family. In terms of assembly, complex I is composed of 37 different subunits.

Its subcellular location is the mitochondrion inner membrane. It catalyses the reaction a ubiquinone + NADH + 5 H(+)(in) = a ubiquinol + NAD(+) + 4 H(+)(out). In terms of biological role, core subunit of the mitochondrial membrane respiratory chain NADH dehydrogenase (Complex I) that is believed to belong to the minimal assembly required for catalysis. Complex I functions in the transfer of electrons from NADH to the respiratory chain. The immediate electron acceptor for the enzyme is believed to be ubiquinone. This chain is NADH-ubiquinone oxidoreductase chain 1 (ND1), found in Yarrowia lipolytica (strain CLIB 122 / E 150) (Yeast).